Consider the following 533-residue polypeptide: T-complex protein 1 subunit delta (533 aa).

The segment covering 1-15 (MAQSQVGKGSPSNAT) has biased composition (polar residues). The disordered stretch occupies residues 1–25 (MAQSQVGKGSPSNATFRDKEKPQEV). The span at 16–25 (FRDKEKPQEV) shows a compositional bias: basic and acidic residues.

The protein belongs to the TCP-1 chaperonin family. As to quaternary structure, heterooligomeric complex of about 850 to 900 kDa that forms two stacked rings, 12 to 16 nm in diameter.

Its subcellular location is the cytoplasm. Its function is as follows. Molecular chaperone; assists the folding of proteins upon ATP hydrolysis. Known to play a role, in vitro, in the folding of actin and tubulin. This Debaryomyces hansenii (strain ATCC 36239 / CBS 767 / BCRC 21394 / JCM 1990 / NBRC 0083 / IGC 2968) (Yeast) protein is T-complex protein 1 subunit delta (CCT4).